Here is a 431-residue protein sequence, read N- to C-terminus: Cyclic GMP-AMP synthase-like receptor (431 aa).

ATP-binding positions include serine 73 and 85 to 87; that span reads EFD. Residues glutamate 85, aspartate 87, and aspartate 212 each coordinate Mg(2+). Residue aspartate 212 coordinates GTP. ATP-binding positions include lysine 290 and 304 to 308; that span reads SYALK. Residue glutamate 316 coordinates Mn(2+).

Belongs to the mab-21 family. It depends on Mg(2+) as a cofactor. The cofactor is Mn(2+).

It carries out the reaction GTP + ATP = 2',3'-cGAMP + 2 diphosphate. The enzyme catalyses GTP + ATP = pppGp(2'-5')A + diphosphate. It catalyses the reaction pppGp(2'-5')A = 2',3'-cGAMP + diphosphate. Its function is as follows. Nucleotidyltransferase that catalyzes the formation of cyclic GMP-AMP (2',3'-cGAMP) from ATP and GTP and plays a key role in innate immunity. Acts as a key sensor of double-stranded RNA (dsRNA), the presence of dsRNA in the cytoplasm being a danger signal that triggers the immune responses. Directly binds dsRNA, activating the nucleotidyltransferase activity, leading to synthesis of 2',3'-cGAMP, a second messenger that binds to and activates Sting, thereby triggering the immune response via activation of the NF-kappa-B transcription factor. This Frankliniella occidentalis (Western flower thrips) protein is Cyclic GMP-AMP synthase-like receptor.